Reading from the N-terminus, the 86-residue chain is uncharacterized protein (86 aa).

The protein to C.jejuni CJ0253.

This is an uncharacterized protein from Helicobacter pylori (strain J99 / ATCC 700824) (Campylobacter pylori J99).